A 628-amino-acid polypeptide reads, in one-letter code: Dihydroxy-acid dehydratase (628 aa).

D80 is a Mg(2+) binding site. Residue C121 participates in [2Fe-2S] cluster binding. The Mg(2+) site is built by D122 and K123. K123 carries the post-translational modification N6-carboxylysine. A [2Fe-2S] cluster-binding site is contributed by C207. E503 is a binding site for Mg(2+). S529 functions as the Proton acceptor in the catalytic mechanism.

Belongs to the IlvD/Edd family. As to quaternary structure, homodimer. [2Fe-2S] cluster serves as cofactor. Mg(2+) is required as a cofactor.

The enzyme catalyses (2R)-2,3-dihydroxy-3-methylbutanoate = 3-methyl-2-oxobutanoate + H2O. It carries out the reaction (2R,3R)-2,3-dihydroxy-3-methylpentanoate = (S)-3-methyl-2-oxopentanoate + H2O. The protein operates within amino-acid biosynthesis; L-isoleucine biosynthesis; L-isoleucine from 2-oxobutanoate: step 3/4. It functions in the pathway amino-acid biosynthesis; L-valine biosynthesis; L-valine from pyruvate: step 3/4. Functions in the biosynthesis of branched-chain amino acids. Catalyzes the dehydration of (2R,3R)-2,3-dihydroxy-3-methylpentanoate (2,3-dihydroxy-3-methylvalerate) into 2-oxo-3-methylpentanoate (2-oxo-3-methylvalerate) and of (2R)-2,3-dihydroxy-3-methylbutanoate (2,3-dihydroxyisovalerate) into 2-oxo-3-methylbutanoate (2-oxoisovalerate), the penultimate precursor to L-isoleucine and L-valine, respectively. The polypeptide is Dihydroxy-acid dehydratase (Psychrobacter arcticus (strain DSM 17307 / VKM B-2377 / 273-4)).